Consider the following 154-residue polypeptide: Small ribosomal subunit protein uS7 (154 aa).

This sequence belongs to the universal ribosomal protein uS7 family.

This is Small ribosomal subunit protein uS7 (RPS5) from Nicotiana plumbaginifolia (Leadwort-leaved tobacco).